We begin with the raw amino-acid sequence, 503 residues long: Maturase K (503 aa).

It belongs to the intron maturase 2 family. MatK subfamily.

It localises to the plastid. Its subcellular location is the chloroplast. Its function is as follows. Usually encoded in the trnK tRNA gene intron. Probably assists in splicing its own and other chloroplast group II introns. The sequence is that of Maturase K from Vicia faba (Broad bean).